The chain runs to 287 residues: ATP synthase gamma chain (287 aa).

The protein belongs to the ATPase gamma chain family. F-type ATPases have 2 components, CF(1) - the catalytic core - and CF(0) - the membrane proton channel. CF(1) has five subunits: alpha(3), beta(3), gamma(1), delta(1), epsilon(1). CF(0) has three main subunits: a, b and c.

The protein localises to the cell membrane. In terms of biological role, produces ATP from ADP in the presence of a proton gradient across the membrane. The gamma chain is believed to be important in regulating ATPase activity and the flow of protons through the CF(0) complex. This is ATP synthase gamma chain from Wolbachia sp. subsp. Drosophila simulans (strain wRi).